A 132-amino-acid polypeptide reads, in one-letter code: Fatty acid-binding protein 2 (132 aa).

Ser2 carries the N-acetylserine modification. Hexadecanoate-binding positions include Gln40 and 128 to 130 (RYY).

This sequence belongs to the calycin superfamily. Fatty-acid binding protein (FABP) family. As to quaternary structure, monomer. As to expression, midgut.

The protein localises to the cytoplasm. Its function is as follows. Binds fatty acids in a 1:1 molar ratio. The polypeptide is Fatty acid-binding protein 2 (MFB2) (Manduca sexta (Tobacco hawkmoth)).